We begin with the raw amino-acid sequence, 143 residues long: Large ribosomal subunit protein uL13c (143 aa).

It belongs to the universal ribosomal protein uL13 family. In terms of assembly, part of the 50S ribosomal subunit.

It localises to the plastid. The protein localises to the chloroplast. The polypeptide is Large ribosomal subunit protein uL13c (Guillardia theta (Cryptophyte)).